We begin with the raw amino-acid sequence, 233 residues long: NAD-dependent protein deacylase (233 aa).

The 230-residue stretch at 1 to 230 (MKNIMILSGA…ALDIENFMKD (230 aa)) folds into the Deacetylase sirtuin-type domain. 9 to 28 (GAGLSAPSGLKTFRDNDGLW) provides a ligand contact to NAD(+). Substrate contacts are provided by tyrosine 53 and arginine 56. 88 to 91 (QNVD) lines the NAD(+) pocket. Catalysis depends on histidine 106, which acts as the Proton acceptor. Residues cysteine 114, cysteine 117, cysteine 133, and cysteine 136 each coordinate Zn(2+). NAD(+)-binding positions include 172–174 (GTS) and isoleucine 213.

The protein belongs to the sirtuin family. Class III subfamily. Zn(2+) serves as cofactor.

It localises to the cytoplasm. The enzyme catalyses N(6)-acetyl-L-lysyl-[protein] + NAD(+) + H2O = 2''-O-acetyl-ADP-D-ribose + nicotinamide + L-lysyl-[protein]. It catalyses the reaction N(6)-succinyl-L-lysyl-[protein] + NAD(+) + H2O = 2''-O-succinyl-ADP-D-ribose + nicotinamide + L-lysyl-[protein]. Functionally, NAD-dependent lysine deacetylase and desuccinylase that specifically removes acetyl and succinyl groups on target proteins. Modulates the activities of several proteins which are inactive in their acylated form. This chain is NAD-dependent protein deacylase, found in Campylobacter jejuni (strain RM1221).